Consider the following 571-residue polypeptide: Proline--tRNA ligase (571 aa).

Belongs to the class-II aminoacyl-tRNA synthetase family. ProS type 1 subfamily. In terms of assembly, homodimer.

It localises to the cytoplasm. It carries out the reaction tRNA(Pro) + L-proline + ATP = L-prolyl-tRNA(Pro) + AMP + diphosphate. In terms of biological role, catalyzes the attachment of proline to tRNA(Pro) in a two-step reaction: proline is first activated by ATP to form Pro-AMP and then transferred to the acceptor end of tRNA(Pro). As ProRS can inadvertently accommodate and process non-cognate amino acids such as alanine and cysteine, to avoid such errors it has two additional distinct editing activities against alanine. One activity is designated as 'pretransfer' editing and involves the tRNA(Pro)-independent hydrolysis of activated Ala-AMP. The other activity is designated 'posttransfer' editing and involves deacylation of mischarged Ala-tRNA(Pro). The misacylated Cys-tRNA(Pro) is not edited by ProRS. The sequence is that of Proline--tRNA ligase from Mannheimia succiniciproducens (strain KCTC 0769BP / MBEL55E).